We begin with the raw amino-acid sequence, 661 residues long: Peroxisomal acyl-coenzyme A oxidase 1 (661 aa).

Phosphoserine is present on Ser26. Position 65 is an N6-acetyllysine (Lys65). Position 89 is an N6-succinyllysine (Lys89). Thr139 lines the FAD pocket. Lys159 carries the post-translational modification N6-succinyllysine. Gly178 serves as a coordination point for FAD. An N6-acetyllysine modification is found at Lys216. The residue at position 241 (Lys241) is an N6-succinyllysine. 3 positions are modified to N6-acetyllysine: Lys255, Lys267, and Lys272. The residue at position 349 (Lys349) is an N6-succinyllysine. Glu421 functions as the Proton acceptor in the catalytic mechanism. An N6-acetyllysine; alternate mark is found at Lys437 and Lys446. An N6-succinyllysine; alternate mark is found at Lys437 and Lys446. N6-acetyllysine is present on Lys500. An N6-acetyllysine; alternate modification is found at Lys512. N6-succinyllysine; alternate is present on Lys512. Lys542 is subject to N6-succinyllysine. The residue at position 637 (Lys637) is an N6-acetyllysine; alternate. At Lys637 the chain carries N6-succinyllysine; alternate. Lys643 is modified (N6-succinyllysine). Phosphoserine is present on Ser649. N6-acetyllysine is present on Lys652. Residue Lys655 is modified to N6-succinyllysine. A Microbody targeting signal motif is present at residues 659 to 661 (SKL).

This sequence belongs to the acyl-CoA oxidase family. In terms of assembly, homodimer. Interacts with LONP2. FAD is required as a cofactor.

Its subcellular location is the peroxisome. The enzyme catalyses a 2,3-saturated acyl-CoA + O2 = a (2E)-enoyl-CoA + H2O2. It catalyses the reaction hexadecanoyl-CoA + O2 = (2E)-hexadecenoyl-CoA + H2O2. It carries out the reaction dodecanoyl-CoA + O2 = (2E)-dodecenoyl-CoA + H2O2. The catalysed reaction is octanoyl-CoA + O2 = (2E)-octenoyl-CoA + H2O2. The enzyme catalyses decanoyl-CoA + O2 = (2E)-decenoyl-CoA + H2O2. It catalyses the reaction tetradecanoyl-CoA + O2 = (2E)-tetradecenoyl-CoA + H2O2. It carries out the reaction hexadecanedioyl-CoA + O2 = (2E)-hexadecenedioyl-CoA + H2O2. The catalysed reaction is tetracosanoyl-CoA + O2 = (2E)-tetracosenoyl-CoA + H2O2. The enzyme catalyses glutaryl-CoA + O2 = (2E)-glutaconyl-CoA + H2O2. It catalyses the reaction hexanoyl-CoA + O2 = (2E)-hexenoyl-CoA + H2O2. It carries out the reaction octadecanoyl-CoA + O2 = (2E)-octadecenoyl-CoA + H2O2. The catalysed reaction is (5Z,8Z,11Z,14Z,17Z)-eicosapentaenoyl-CoA + O2 = (2E,5Z,8Z,11Z,14Z,17Z)-icosahexaenoyl-CoA + H2O2. The enzyme catalyses (6Z,9Z,12Z,15Z,18Z,21Z)-tetracosahexaenoyl-CoA + O2 = (2E,6Z,9Z,12Z,15Z,18Z,21Z)-tetracosaheptaenoyl-CoA + H2O2. It functions in the pathway lipid metabolism; peroxisomal fatty acid beta-oxidation. In terms of biological role, involved in the initial and rate-limiting step of peroxisomal beta-oxidation of straight-chain saturated and unsaturated very-long-chain fatty acids. Catalyzes the desaturation of fatty acyl-CoAs such as palmitoyl-CoA (hexadecanoyl-CoA) to 2-trans-enoyl-CoAs ((2E)-enoyl-CoAs) such as (2E)-hexadecenoyl-CoA, and donates electrons directly to molecular oxygen (O(2)), thereby producing hydrogen peroxide (H(2)O(2)). In Cavia porcellus (Guinea pig), this protein is Peroxisomal acyl-coenzyme A oxidase 1.